The chain runs to 206 residues: Small ribosomal subunit protein uS4A (206 aa).

The S4 RNA-binding domain maps to 98-164 (MRLDNVVYKL…EKFKTFAENP (67 aa)).

This sequence belongs to the universal ribosomal protein uS4 family. In terms of assembly, part of the 30S ribosomal subunit. Contacts protein S5. The interaction surface between S4 and S5 is involved in control of translational fidelity.

In terms of biological role, one of the primary rRNA binding proteins, it binds directly to 16S rRNA where it nucleates assembly of the body of the 30S subunit. Its function is as follows. With S5 and S12 plays an important role in translational accuracy. This is Small ribosomal subunit protein uS4A from Clostridium novyi (strain NT).